The chain runs to 366 residues: Box C/D snoRNA protein 1 (366 aa).

Positions 5, 8, 17, 20, 25, 29, 33, and 39 each coordinate Zn(2+). The HIT-type zinc finger occupies 5-39 (CGVCGIKEFKYKCPRCLVQTCSLECSKKHKTRDNC). The interval 318-366 (DNAREEEDAEEDSQPTEEPVQKETQDASDSDSDSDDDYNPGLSMDFLTA) is disordered. Acidic residues-rich tracts occupy residues 321-332 (REEEDAEEDSQP) and 343-355 (DASD…DDDY). Phosphoserine is present on serine 330.

This sequence belongs to the BCD1 family.

It localises to the nucleus. In terms of biological role, required for box C/D snoRNAs accumulation involved in snoRNA processing, snoRNA transport to the nucleolus and ribosome biogenesis. The polypeptide is Box C/D snoRNA protein 1 (BCD1) (Saccharomyces cerevisiae (strain ATCC 204508 / S288c) (Baker's yeast)).